Consider the following 141-residue polypeptide: Hemoglobin subunit alpha (141 aa).

Positions 1–141 (VLSPADKTNV…VSTVLTSKYR (141 aa)) constitute a Globin domain. Position 3 is a phosphoserine (Ser3). The residue at position 7 (Lys7) is an N6-succinyllysine. The residue at position 8 (Thr8) is a Phosphothreonine. Lys11 is modified (N6-succinyllysine). Lys16 is subject to N6-acetyllysine; alternate. The residue at position 16 (Lys16) is an N6-succinyllysine; alternate. Tyr24 carries the post-translational modification Phosphotyrosine. Ser35 is modified (phosphoserine). Lys40 bears the N6-succinyllysine mark. At Ser49 the chain carries Phosphoserine. Residue His58 coordinates O2. His87 contacts heme b. Ser102 carries the phosphoserine modification. Thr108 bears the Phosphothreonine mark. 2 positions are modified to phosphoserine: Ser124 and Ser131. Phosphothreonine occurs at positions 134 and 137. Ser138 is modified (phosphoserine).

Belongs to the globin family. In terms of assembly, heterotetramer of two alpha chains and two beta chains. As to expression, red blood cells.

Functionally, involved in oxygen transport from the lung to the various peripheral tissues. Its function is as follows. Hemopressin acts as an antagonist peptide of the cannabinoid receptor CNR1. Hemopressin-binding efficiently blocks cannabinoid receptor CNR1 and subsequent signaling. This chain is Hemoglobin subunit alpha (HBA), found in Semnopithecus entellus (Northern plains gray langur).